The following is a 31-amino-acid chain: Cyclotide mden-M (31 aa).

Positions 1–31 (GTIPCGESCVYIPCITSALGCSCKKKVCYKN) form a cross-link, cyclopeptide (Gly-Asn). 3 disulfide bridges follow: Cys5-Cys21, Cys9-Cys23, and Cys14-Cys28.

Belongs to the cyclotide family. Bracelet subfamily. In terms of processing, this is a cyclic peptide.

Probably participates in a plant defense mechanism. This Melicytus dentatus (Tree violet) protein is Cyclotide mden-M.